The primary structure comprises 130 residues: Small ribosomal subunit protein uS8 (130 aa).

Belongs to the universal ribosomal protein uS8 family. In terms of assembly, part of the 30S ribosomal subunit.

Functionally, one of the primary rRNA binding proteins, it binds directly to 16S rRNA central domain where it helps coordinate assembly of the platform of the 30S subunit. The sequence is that of Small ribosomal subunit protein uS8 from Methanosarcina mazei (strain ATCC BAA-159 / DSM 3647 / Goe1 / Go1 / JCM 11833 / OCM 88) (Methanosarcina frisia).